A 324-amino-acid polypeptide reads, in one-letter code: Granaticin polyketide synthase bifunctional cyclase/dehydratase (324 aa).

The segment at 1–21 (MVQPAATPVSLPSPTVHRSEH) is disordered.

Its pathway is antibiotic biosynthesis; granaticin biosynthesis. Functionally, is needed for correct cyclization of the oligoketide leading to isochromanequinone formation. In Streptomyces violaceoruber, this protein is Granaticin polyketide synthase bifunctional cyclase/dehydratase (gra-orf4).